A 383-amino-acid chain; its full sequence is Neuropeptide Y receptor type 1 (383 aa).

The Extracellular segment spans residues 1–44 (MNSTSFSQVENHSIYYNFSEKNSRFLAFENDDCHLPLAMIFTLA). Residues N2, N11, and N17 are each glycosylated (N-linked (GlcNAc...) asparagine). The helical transmembrane segment at 45 to 65 (LAYGAVIILGVSGNLALIIII) threads the bilayer. Over 66–76 (LKQKEMRNVTN) the chain is Cytoplasmic. The chain crosses the membrane as a helical span at residues 77–97 (ILIVNLSFSDLLVAIMCLPFT). The Extracellular segment spans residues 98–116 (FVYTLMDHWVFGEAMCKLN). A disulfide bridge connects residues C113 and C198. Residues 117–137 (PFVQCVSITVSIFSLVLIAVE) traverse the membrane as a helical segment. The Cytoplasmic portion of the chain corresponds to 138–154 (RHQLIINPRGWRPNNRH). A helical membrane pass occupies residues 155-175 (AYVGIAVIWVLAVASSLPFLI). Residues 176-211 (YQVLTDEPFQNVTLDAFKDKYVCFDKFPSDSHRLSY) lie on the Extracellular side of the membrane. N186 carries an N-linked (GlcNAc...) asparagine glycan. The helical transmembrane segment at 212–232 (TTLLLVLQYFGPLCFIFICYF) threads the bilayer. The Cytoplasmic segment spans residues 233 to 260 (KIYVRLKRRNSMMDKMRDNKYRSSEAKR). A helical transmembrane segment spans residues 261 to 281 (INIMLLSIVVAFAVCWLPLTI). The Extracellular portion of the chain corresponds to 282–299 (FNTVFDWDHQIIATCNHN). Residues 300 to 320 (LLFLLCHLTAMISTCVNPIFY) traverse the membrane as a helical segment. The Cytoplasmic portion of the chain corresponds to 321–383 (GFLNKNFQRD…KIHTDDNEKI (63 aa)). C338 is lipidated: S-palmitoyl cysteine. S368 is modified (phosphoserine).

Belongs to the G-protein coupled receptor 1 family.

Its subcellular location is the cell membrane. Receptor for neuropeptide Y and peptide YY. This chain is Neuropeptide Y receptor type 1 (NPY1R), found in Bos taurus (Bovine).